Consider the following 92-residue polypeptide: Small ribosomal subunit protein uS19 (92 aa).

Belongs to the universal ribosomal protein uS19 family.

In terms of biological role, protein S19 forms a complex with S13 that binds strongly to the 16S ribosomal RNA. This is Small ribosomal subunit protein uS19 from Granulibacter bethesdensis (strain ATCC BAA-1260 / CGDNIH1).